The following is a 194-amino-acid chain: dTTP/UTP pyrophosphatase (194 aa).

Catalysis depends on aspartate 77, which acts as the Proton acceptor.

It belongs to the Maf family. YhdE subfamily. A divalent metal cation is required as a cofactor.

Its subcellular location is the cytoplasm. The catalysed reaction is dTTP + H2O = dTMP + diphosphate + H(+). It carries out the reaction UTP + H2O = UMP + diphosphate + H(+). Functionally, nucleoside triphosphate pyrophosphatase that hydrolyzes dTTP and UTP. May have a dual role in cell division arrest and in preventing the incorporation of modified nucleotides into cellular nucleic acids. The chain is dTTP/UTP pyrophosphatase from Flavobacterium johnsoniae (strain ATCC 17061 / DSM 2064 / JCM 8514 / BCRC 14874 / CCUG 350202 / NBRC 14942 / NCIMB 11054 / UW101) (Cytophaga johnsonae).